The primary structure comprises 465 residues: BTB/POZ and MATH domain-containing protein 4 (465 aa).

The segment at 12–40 is disordered; the sequence is LQRQNPLQKSEQQRRNFEMPSPPTTTSLS. The MATH domain maps to 46-180; sequence NGSHSFTIKG…DDCLKINCTV (135 aa). The BTB domain occupies 216-282; that stretch reads SDITFNVSGE…IYKDALIEDA (67 aa). Disordered stretches follow at residues 395–429 and 441–465; these read SGGGGKTRSVWGQFSDGGAETNGRQAQTWGDINGG and VNANGSGRNNNDNNNSDDPMAELED. Positions 442 to 458 are enriched in low complexity; it reads NANGSGRNNNDNNNSDD.

This sequence belongs to the Tdpoz family. In terms of assembly, interacts with RAP2-4. Binds to MYB56 at the promoter of FLOWERING LOCUS T (FT). As to expression, ubiquitous.

It is found in the cytoplasm. Its pathway is protein modification; protein ubiquitination. Functionally, may act as a substrate-specific adapter of an E3 ubiquitin-protein ligase complex (CUL3-RBX1-BTB) which mediates the ubiquitination and subsequent proteasomal degradation of target proteins. The polypeptide is BTB/POZ and MATH domain-containing protein 4 (BPM4) (Arabidopsis thaliana (Mouse-ear cress)).